The sequence spans 473 residues: Keratin, type I cuticular Ha6 (473 aa).

The interval 1 to 93 is head; the sequence is MATQICTPTF…FCEGAFNGNE (93 aa). Residues 93–404 form the IF rod domain; it reads EKATMQILND…RLLDGEDCKL (312 aa). Residues 94 to 128 form a coil 1A region; that stretch reads KATMQILNDRLANYLEKVRQLEQENTQLECRIREW. The interval 129–139 is linker 1; it reads YECQIPYICPD. The coil 1B stretch occupies residues 140–240; that stretch reads YQSYFKTAEE…HEEEVNALRS (101 aa). Residues 241-256 form a linker 12 region; sequence QLGDRLNVEVDAAPPV. The tract at residues 257–400 is coil 2; it reads DLNKILDDMR…ATYRRLLDGE (144 aa). Residues 401–473 are tail; the sequence is DCKLPAHPCS…SREHVVPRAM (73 aa).

This sequence belongs to the intermediate filament family. As to quaternary structure, heterotetramer of two type I and two type II keratins. As to expression, in skin, only expressed in the suprabasal cells of tail scale epidermis. Suprabasally expressed in stratified squamous epithelia and also in the posterior unit of the complex filiform papillae of tongue. Expressed in rare anatomical sites in which an orthokeratinized stratum corneum would be too soft and a hard keratinized structure would be too rigid to meet the functional requirement of the respective epithelia.

The polypeptide is Keratin, type I cuticular Ha6 (Mus musculus (Mouse)).